Reading from the N-terminus, the 485-residue chain is Protein disulfide isomerase-like 5-4 (485 aa).

Positions 114–263 (VPTGSEFHPG…LVAAMETYVA (150 aa)) constitute a Thioredoxin domain. The Nucleophile role is filled by Cys-170. A helical membrane pass occupies residues 444–464 (FSHFITNVCAIIGGVFTVAGI).

It belongs to the protein disulfide isomerase family.

It localises to the membrane. Functionally, acts as a protein-folding catalyst that interacts with nascent polypeptides to catalyze the formation, isomerization, and reduction or oxidation of disulfide bonds. May play a role in storage protein biogenesis. This Oryza sativa subsp. japonica (Rice) protein is Protein disulfide isomerase-like 5-4 (PDIL5-4).